The following is a 446-amino-acid chain: O-antigen polymerase (446 aa).

Helical transmembrane passes span 11–31, 33–53, 58–78, 104–124, 147–167, 186–206, 211–231, 252–272, 355–375, 391–411, and 415–435; these read ICSY…VINE, FCEI…VIII, QGGF…FILI, IYVF…VLLY, QLSM…IKSY, LYDE…SLLF, NFIL…LVGL, LKIK…SLFL, IYLG…SLAF, KLAY…IYFA, and LFDF…LSIV.

Its subcellular location is the cell inner membrane. It catalyses the reaction n lipid-linked O-antigen repeat units = a lipid-linked O antigen + (n-1) polyisoprenyl diphosphate.. The protein operates within bacterial outer membrane biogenesis; LPS O-antigen biosynthesis. Its function is as follows. Polymerase involved in the biosynthesis of the lipopolysaccharide (LPS). Catalyzes the polymerization of the O-antigen repeat units on the periplasmic face of the inner membrane, leading to the formation of the lipid-linked O-antigen molecule. In vitro, shows a preference for bacteria-based, undecaprenyl-containing substrates rather than eukaryote-based, dolichol-containing substrates. This chain is O-antigen polymerase, found in Escherichia coli.